Consider the following 631-residue polypeptide: Coiled-coil domain-containing protein 93 (631 aa).

Disordered stretches follow at residues 1-23 (MGLPRGPEGQGLPEVETREDEEQ) and 214-243 (QSKMEKAEDKKTALPAGLSATEKADAHEED). Residues 1–430 (MGLPRGPEGQ…LKAERAPRGD (430 aa)) are sufficient for interaction with CCDC22. The segment covering 215-225 (SKMEKAEDKKT) has biased composition (basic and acidic residues). 3 positions are modified to phosphoserine: serine 298, serine 301, and serine 305. Residues 309–631 (LGTSQLHRRK…LLSKVKAKAS (323 aa)) adopt a coiled-coil conformation. Over residues 421–433 (LKAERAPRGDEKT) the composition is skewed to basic and acidic residues. Residues 421–447 (LKAERAPRGDEKTLSSGEPPGTLTSAM) are disordered. A sufficient for interaction with WASHC2C region spans residues 448 to 631 (THDEDLDRRY…LLSKVKAKAS (184 aa)).

This sequence belongs to the CCDC93 family. Component of the commander complex consisting of the CCC subcomplex and the retriever subcomplex. Component of the CCC (COMMD/CCDC22/CCDC93) subcomplex consisting of COMMD1, COMMD2, COMMD3, COMMD4, COMMD5, COMMD6, COMMD7, COMMD8, COMMD9, COMMD10, CCDC22 and CCDC93. Forms a coiled-coil heterodimer with CCDC22; this heterodimer interacts with the guanine nucleotide exchange factor DENND10; the interaction is direct. Interacts with WASHC1. Interacts directly with WASHC2C. Interacts with SNX17 and SNX31.

The protein localises to the early endosome. Component of the commander complex that is essential for endosomal recycling of transmembrane cargos; the commander complex is composed of composed of the CCC subcomplex and the retriever subcomplex. Component of the CCC complex, which is involved in the regulation of endosomal recycling of surface proteins, including integrins, signaling receptor and channels. The CCC complex associates with SNX17, retriever and WASH complexes to prevent lysosomal degradation and promote cell surface recycling of numerous cargos such as integrins ITGA5:ITGB1. Involved in copper-dependent ATP7A trafficking between the trans-Golgi network and vesicles in the cell periphery; the function is proposed to depend on its association within the CCC complex and cooperation with the WASH complex on early endosomes and is dependent on its interaction with WASHC2C. Its function is as follows. (Microbial infection) The CCC complex, in collaboration with the heterotrimeric retriever complex, mediates the exit of human papillomavirus to the cell surface. The sequence is that of Coiled-coil domain-containing protein 93 (CCDC93) from Homo sapiens (Human).